We begin with the raw amino-acid sequence, 279 residues long: Pantothenate synthetase (279 aa).

26-33 contributes to the ATP binding site; the sequence is MGNLHDGH. The active-site Proton donor is the His33. Gln57 is a binding site for (R)-pantoate. A beta-alanine-binding site is contributed by Gln57. 144-147 is a binding site for ATP; sequence GKKD. Gln150 lines the (R)-pantoate pocket. 181–184 contacts ATP; that stretch reads LSSR.

It belongs to the pantothenate synthetase family. In terms of assembly, homodimer.

The protein resides in the cytoplasm. The enzyme catalyses (R)-pantoate + beta-alanine + ATP = (R)-pantothenate + AMP + diphosphate + H(+). The protein operates within cofactor biosynthesis; (R)-pantothenate biosynthesis; (R)-pantothenate from (R)-pantoate and beta-alanine: step 1/1. Catalyzes the condensation of pantoate with beta-alanine in an ATP-dependent reaction via a pantoyl-adenylate intermediate. The sequence is that of Pantothenate synthetase from Herminiimonas arsenicoxydans.